Reading from the N-terminus, the 632-residue chain is Chaperone protein HtpG (632 aa).

The a; substrate-binding stretch occupies residues 1–345 (MTTAAHAETL…SKDLSLNVSR (345 aa)). Positions 346–561 (ELLQKDPQVD…EHDMGYQMRR (216 aa)) are b. The tract at residues 562 to 632 (LMEAAGQPLP…VQRLNKLLSH (71 aa)) is c.

It belongs to the heat shock protein 90 family. As to quaternary structure, homodimer.

It localises to the cytoplasm. Its function is as follows. Molecular chaperone. Has ATPase activity. The polypeptide is Chaperone protein HtpG (Chromohalobacter salexigens (strain ATCC BAA-138 / DSM 3043 / CIP 106854 / NCIMB 13768 / 1H11)).